We begin with the raw amino-acid sequence, 148 residues long: Deoxyuridine 5'-triphosphate nucleotidohydrolase (148 aa).

Substrate-binding positions include 67 to 69 (RSG), Asn80, 84 to 86 (LID), and Met94.

The protein belongs to the dUTPase family. The cofactor is Mg(2+).

The enzyme catalyses dUTP + H2O = dUMP + diphosphate + H(+). It participates in pyrimidine metabolism; dUMP biosynthesis; dUMP from dCTP (dUTP route): step 2/2. Its function is as follows. This enzyme is involved in nucleotide metabolism: it produces dUMP, the immediate precursor of thymidine nucleotides and it decreases the intracellular concentration of dUTP so that uracil cannot be incorporated into DNA. The chain is Deoxyuridine 5'-triphosphate nucleotidohydrolase from Paraburkholderia phytofirmans (strain DSM 17436 / LMG 22146 / PsJN) (Burkholderia phytofirmans).